The following is a 189-amino-acid chain: MALPFALMMALVVLSCKSSCSLGCNLSQTHSLNNRRTLMLMAQMRRISPFSCLKDRHDFEFPQEEFDGNQFQKAQAISVLHEMMQQTFNLFSTKNSSAAWDETLLEKFYIELFQQMNDLEACVIQEVGVEETPLMNEDSILAVKKYFQRITLYLMEKKYSPCAWEVVRAEIMRSLSFSTNLQKRLRRKD.

Positions 1-23 (MALPFALMMALVVLSCKSSCSLG) are cleaved as a signal peptide. 2 cysteine pairs are disulfide-bonded: Cys24/Cys122 and Cys52/Cys162. Asn95 carries N-linked (GlcNAc...) asparagine glycosylation.

Belongs to the alpha/beta interferon family.

It localises to the secreted. Produced by macrophages, IFN-alpha have antiviral activities. Interferon stimulates the production of two enzymes: a protein kinase and an oligoadenylate synthetase. The polypeptide is Interferon alpha-14 (IFNA14) (Homo sapiens (Human)).